Here is a 236-residue protein sequence, read N- to C-terminus: Small ribosomal subunit protein uS2c (236 aa).

The protein belongs to the universal ribosomal protein uS2 family.

The protein localises to the plastid. Its subcellular location is the chloroplast. In Piper cenocladum (Ant piper), this protein is Small ribosomal subunit protein uS2c (rps2).